Consider the following 757-residue polypeptide: Maltose phosphorylase (757 aa).

A substrate-binding site is contributed by 354–355 (WD). The active-site Proton donor is Glu483. Substrate is bound at residue 588-589 (KQ).

Belongs to the glycosyl hydrolase 65 family.

It catalyses the reaction D-maltose + phosphate = beta-D-glucose 1-phosphate + D-glucose. It participates in glycan degradation; maltose degradation. Functionally, catalyzes the phosphorolysis of maltose, leading to the formation of glucose and glucose 1-P. In Bacillus subtilis (strain 168), this protein is Maltose phosphorylase (mdxK).